The sequence spans 193 residues: Lipid A acyltransferase PagP (193 aa).

A signal peptide spans 1–32 (MNGMAVVMIIRKYFLIIALLVMPWLAIPSVSA). Active-site residues include H65, D108, and S109.

It belongs to the lipid A palmitoyltransferase family. In terms of assembly, homodimer.

It is found in the cell outer membrane. It carries out the reaction a lipid A + a 1,2-diacyl-sn-glycero-3-phosphocholine = a hepta-acyl lipid A + a 2-acyl-sn-glycero-3-phosphocholine. It catalyses the reaction a lipid IVA + a 1,2-diacyl-sn-glycero-3-phosphocholine = a lipid IVB + a 2-acyl-sn-glycero-3-phosphocholine. The catalysed reaction is a lipid IIA + a 1,2-diacyl-sn-glycero-3-phosphocholine = a lipid IIB + a 2-acyl-sn-glycero-3-phosphocholine. Transfers a fatty acid residue from the sn-1 position of a phospholipid to the N-linked hydroxyfatty acid chain on the proximal unit of lipid A or its precursors. The polypeptide is Lipid A acyltransferase PagP (Salmonella paratyphi C (strain RKS4594)).